The primary structure comprises 328 residues: PDZ and LIM domain protein 1 (328 aa).

Residue T2 is modified to N-acetylthreonine. Residues T3–E85 form the PDZ domain. Residues S90 and S130 each carry the phosphoserine modification. Phosphotyrosine is present on Y144. The region spanning P257–P316 is the LIM zinc-binding domain. C259, C262, H279, C282, C285, C288, C306, and H309 together coordinate Zn(2+). T315 bears the Phosphothreonine mark. At Y320 the chain carries Phosphotyrosine.

Interacts with ACTN1, ACTN2 and ACTN4. Interacts with PDLIM4.

The protein resides in the cytoplasm. It localises to the cytoskeleton. The protein localises to the myofibril. It is found in the sarcomere. Its subcellular location is the z line. Cytoskeletal protein that may act as an adapter that brings other proteins (like kinases) to the cytoskeleton. Involved in assembly, disassembly and directioning of stress fibers in fibroblasts. Required for the localization of ACTN1 and PALLD to stress fibers. Required for cell migration and in maintaining cell polarity of fibroblasts. The protein is PDZ and LIM domain protein 1 (PDLIM1) of Bos taurus (Bovine).